The chain runs to 69 residues: Fungal defensin oryzeasin (69 aa).

Residues 1–18 (MKLLTVAFSLLLLGQVHA) form the signal peptide. A propeptide spanning residues 19-26 (SPLVLDKR) is cleaved from the precursor. Intrachain disulfides connect C29–C60, C44–C66, and C48–C68.

This sequence belongs to the invertebrate defensin family.

Its subcellular location is the secreted. It is found in the target cell membrane. Shows antibacterial activity against numerous Gram-positive bacteria. It selectively inhibits peptidoglycan biosynthesis through complex formation with the cell wall precursor lipid II (1:1 molar ratio) thus inhibiting cell wall synthesis. This Aspergillus oryzae (strain ATCC 42149 / RIB 40) (Yellow koji mold) protein is Fungal defensin oryzeasin.